A 477-amino-acid polypeptide reads, in one-letter code: Oleate hydroxylase FAH12 (477 aa).

A disordered region spans residues 26–48 (YESSAAVSPAESPRTSASSTSLS). The span at 27 to 48 (ESSAAVSPAESPRTSASSTSLS) shows a compositional bias: low complexity. Helical transmembrane passes span 101–118 (AYVL…YLFH) and 133–153 (FVLW…LWVI). Residues 155-159 (HECGH) carry the Histidine box-1 motif. Residues 167–187 (FISDLTGWVIHSALLVPYFSW) form a helical membrane-spanning segment. The short motif at 191-195 (HSAHH) is the Histidine box-2 element. The next 3 helical transmembrane spans lie at 234-254 (PIYT…SYLM), 299-319 (YIVL…YLGN), and 327-347 (AVWY…ITFL).

The protein belongs to the fatty acid desaturase type 1 family.

It is found in the microsome membrane. It catalyses the reaction (9Z)-octadecenoate + AH2 + O2 = (12R)-hydroxy-(9Z)-octadecenoate + A + H2O. The protein operates within lipid metabolism; monounsaturated fatty acid biosynthesis. Oleate hydroxylase involved in the biosynthesis of ricinoleate (12-hydroxy-cis-9-octadecenoate), that is present at high levels in C.purpurea sclerotium tissue. Exhibits delta(12) hydroxylase activity on 16C and 18C monounsaturated fatty acids (i.e. oleic and palmitoleic acids), and, to a lower extent, gamma(3) hydroxylase activity on ricinoleate. The chain is Oleate hydroxylase FAH12 from Claviceps purpurea (Ergot fungus).